We begin with the raw amino-acid sequence, 117 residues long: Large ribosomal subunit protein uL18 (117 aa).

Belongs to the universal ribosomal protein uL18 family. In terms of assembly, part of the 50S ribosomal subunit; part of the 5S rRNA/L5/L18/L25 subcomplex. Contacts the 5S and 23S rRNAs.

In terms of biological role, this is one of the proteins that bind and probably mediate the attachment of the 5S RNA into the large ribosomal subunit, where it forms part of the central protuberance. The sequence is that of Large ribosomal subunit protein uL18 from Francisella tularensis subsp. tularensis (strain FSC 198).